The following is a 414-amino-acid chain: Glucose-1-phosphate adenylyltransferase (414 aa).

Alpha-D-glucose 1-phosphate is bound by residues Gly-164, 181–182 (EK), and Ser-199.

It belongs to the bacterial/plant glucose-1-phosphate adenylyltransferase family. In terms of assembly, homotetramer.

The catalysed reaction is alpha-D-glucose 1-phosphate + ATP + H(+) = ADP-alpha-D-glucose + diphosphate. The protein operates within glycan biosynthesis; glycogen biosynthesis. In terms of biological role, involved in the biosynthesis of ADP-glucose, a building block required for the elongation reactions to produce glycogen. Catalyzes the reaction between ATP and alpha-D-glucose 1-phosphate (G1P) to produce pyrophosphate and ADP-Glc. This is Glucose-1-phosphate adenylyltransferase from Leifsonia xyli subsp. xyli (strain CTCB07).